Reading from the N-terminus, the 419-residue chain is MSLLAIGINHHTASVDLREKVAFGPDKLANALQQLSQHEAVNGSVILSTCNRTEVYCDVKSGARSKVIDWLSQFHQIGLEELKPSLYVYEEQAAIRHLMRVSCGLDSLVLGEPQILGQVKQAYSDSREQQAVDASLEKLFQKTFSVAKRVRTETDIGGNAVSVAYAACTLAKHIFESLEKSTVLLVGAGETIELVAKHLHANGCSKMIVANRTRERALTLAEQFDAQVISLQEIPNHLAKADIVISSTASPLPIIGKGMVETALKQRRHQPMLLVDIAVPRDVEAQVGDLNDAYLYTVDDLQSIIDSNIEQRKVEAIQAEAIVAEESAAFMSWLRSLQAVDSIREYRQSANEIREDLLSKALLSLESGSDPEKVLRELSNRLTNKLIHAPTRALQLAAEQGEPAKLTVIRQSLGLDELK.

Substrate contacts are provided by residues 49-52, Ser-107, 112-114, and Gln-118; these read TCNR and EPQ. The active-site Nucleophile is Cys-50. 187-192 provides a ligand contact to NADP(+); that stretch reads GAGETI.

Belongs to the glutamyl-tRNA reductase family. As to quaternary structure, homodimer.

The enzyme catalyses (S)-4-amino-5-oxopentanoate + tRNA(Glu) + NADP(+) = L-glutamyl-tRNA(Glu) + NADPH + H(+). It participates in porphyrin-containing compound metabolism; protoporphyrin-IX biosynthesis; 5-aminolevulinate from L-glutamyl-tRNA(Glu): step 1/2. In terms of biological role, catalyzes the NADPH-dependent reduction of glutamyl-tRNA(Glu) to glutamate 1-semialdehyde (GSA). The chain is Glutamyl-tRNA reductase from Vibrio vulnificus (strain CMCP6).